The sequence spans 137 residues: Large ribosomal subunit protein uL16 (137 aa).

It belongs to the universal ribosomal protein uL16 family. As to quaternary structure, part of the 50S ribosomal subunit.

In terms of biological role, binds 23S rRNA and is also seen to make contacts with the A and possibly P site tRNAs. This is Large ribosomal subunit protein uL16 from Acinetobacter baumannii (strain SDF).